A 453-amino-acid chain; its full sequence is DNA repair protein RadA (453 aa).

Residues 10-27 (CQECGYQSPKYLGRCPNC) form a C4-type zinc finger. 95–102 (GDPGIGKS) provides a ligand contact to ATP. A RadA KNRFG motif motif is present at residues 251-255 (KNRFG). A lon-protease-like region spans residues 350–453 (DAYLKSAGGV…VGQVLNAVFS (104 aa)).

The protein belongs to the RecA family. RadA subfamily.

Functionally, DNA-dependent ATPase involved in processing of recombination intermediates, plays a role in repairing DNA breaks. Stimulates the branch migration of RecA-mediated strand transfer reactions, allowing the 3' invading strand to extend heteroduplex DNA faster. Binds ssDNA in the presence of ADP but not other nucleotides, has ATPase activity that is stimulated by ssDNA and various branched DNA structures, but inhibited by SSB. Does not have RecA's homology-searching function. This chain is DNA repair protein RadA, found in Streptococcus pyogenes serotype M1.